Here is a 321-residue protein sequence, read N- to C-terminus: Ribosomal RNA small subunit methyltransferase H (321 aa).

S-adenosyl-L-methionine-binding positions include 43 to 45 (GGH), Asp63, Phe89, Asp110, and Gln117. The interval 286 to 321 (HPAGKALRAGPRETRDNPRSRSAVLRVAERSERHAA) is disordered. 2 stretches are compositionally biased toward basic and acidic residues: residues 295 to 304 (GPRETRDNPR) and 312 to 321 (VAERSERHAA).

This sequence belongs to the methyltransferase superfamily. RsmH family.

Its subcellular location is the cytoplasm. The enzyme catalyses cytidine(1402) in 16S rRNA + S-adenosyl-L-methionine = N(4)-methylcytidine(1402) in 16S rRNA + S-adenosyl-L-homocysteine + H(+). Functionally, specifically methylates the N4 position of cytidine in position 1402 (C1402) of 16S rRNA. The chain is Ribosomal RNA small subunit methyltransferase H from Acidithiobacillus ferrooxidans (strain ATCC 23270 / DSM 14882 / CIP 104768 / NCIMB 8455) (Ferrobacillus ferrooxidans (strain ATCC 23270)).